A 178-amino-acid chain; its full sequence is MSEVRLPPLRALDDFVLGSARLAAPDPGDPQRWCHRVINNLLYYQTNYLLCFGISLALAGYIRPLHTLLSALVVVVALGVLVWAAETRAAVRRCRRSHPAACLAAVLAISLFILWAVGGAFTFLLSITAPVFLILLHASLRLRNLKNKIENKIESIGLKRTPMGLLLEALGQEQEAGS.

Topologically, residues M1–L41 are cytoplasmic. A helical transmembrane segment spans residues L42–I62. The Extracellular segment spans residues R63 to P64. The helical transmembrane segment at L65 to A85 threads the bilayer. Residues E86–R96 are Cytoplasmic-facing. Residues S97–G119 form a helical membrane-spanning segment. At A120–T122 the chain is on the extracellular side. A helical membrane pass occupies residues F123 to L140. Over R141 to S178 the chain is Cytoplasmic.

The protein belongs to the PRA1 family. In terms of assembly, interacts with CCR5 and GDE1.

It localises to the endosome membrane. Its function is as follows. May be involved in ER/Golgi transport and vesicular traffic. Plays a proapoptotic role in cerulenin-induced neuroblastoma apoptosis. The chain is PRA1 family protein 2 (Praf2) from Mus musculus (Mouse).